Reading from the N-terminus, the 542-residue chain is POTE ankyrin domain family member C (542 aa).

ANK repeat units lie at residues 138 to 171 (EDLD…KRDK), 172 to 201 (QKRT…QLNV), 205 to 234 (KKRT…DQNI), 238 to 267 (YGNT…DIES), 271 to 300 (CGLT…NLNA), 304 to 333 (YGRT…DVSS), and 337 to 373 (SGQT…SENS). A disordered region spans residues 369–494 (SSENSNPEQD…NTGISQDEIL (126 aa)). 3 stretches are compositionally biased toward basic and acidic residues: residues 377–392 (QDLK…RLKV), 401–412 (MSQEPEINKDCD), and 466–481 (EEYH…KQLS). Polar residues predominate over residues 482-494 (EEQNTGISQDEIL). A coiled-coil region spans residues 489-538 (SQDEILTNKQKQIEVAEKKMNSELSLSHKKEEDLLRENSMLQEEIAMLIS).

The protein belongs to the POTE family. Expressed in prostate and testis.

The protein is POTE ankyrin domain family member C (POTEC) of Homo sapiens (Human).